The chain runs to 104 residues: Large ribosomal subunit protein bL21 (104 aa).

The protein belongs to the bacterial ribosomal protein bL21 family. Part of the 50S ribosomal subunit. Contacts protein L20.

In terms of biological role, this protein binds to 23S rRNA in the presence of protein L20. The chain is Large ribosomal subunit protein bL21 from Streptococcus mutans serotype c (strain ATCC 700610 / UA159).